The sequence spans 800 residues: Probable replication endonuclease from prophage-like region (800 aa).

Catalysis depends on O-(5'-phospho-DNA)-tyrosine intermediate residues Y503 and Y507.

Belongs to the phage GPA family.

Its function is as follows. Possible endonuclease which induces a single-strand cut and initiates DNA replication. This Salmonella paratyphi A (strain ATCC 9150 / SARB42) protein is Probable replication endonuclease from prophage-like region.